A 462-amino-acid chain; its full sequence is Cytochrome P450 20A1 (462 aa).

The helical transmembrane segment at 4-24 (FAIFAVTFLLALVGAVLYLYP) threads the bilayer. Cys409 is a binding site for heme.

It belongs to the cytochrome P450 family. The cofactor is heme.

The protein localises to the membrane. The sequence is that of Cytochrome P450 20A1 (Cyp20a1) from Mus musculus (Mouse).